The sequence spans 126 residues: Phosphoribosyl-AMP cyclohydrolase (126 aa).

Aspartate 73 provides a ligand contact to Mg(2+). Position 74 (cysteine 74) interacts with Zn(2+). Mg(2+) is bound by residues aspartate 75 and aspartate 77. Cysteine 91 and cysteine 98 together coordinate Zn(2+).

This sequence belongs to the PRA-CH family. In terms of assembly, homodimer. Mg(2+) is required as a cofactor. It depends on Zn(2+) as a cofactor.

It localises to the cytoplasm. The catalysed reaction is 1-(5-phospho-beta-D-ribosyl)-5'-AMP + H2O = 1-(5-phospho-beta-D-ribosyl)-5-[(5-phospho-beta-D-ribosylamino)methylideneamino]imidazole-4-carboxamide. It functions in the pathway amino-acid biosynthesis; L-histidine biosynthesis; L-histidine from 5-phospho-alpha-D-ribose 1-diphosphate: step 3/9. Its function is as follows. Catalyzes the hydrolysis of the adenine ring of phosphoribosyl-AMP. In Solibacter usitatus (strain Ellin6076), this protein is Phosphoribosyl-AMP cyclohydrolase.